Consider the following 340-residue polypeptide: MDETGNPTIPPASNNTCYDSIDDFRNQVYSTLYSMISVVGFFGNGFVLYVLVKTYHEKSAFQVYMINLAVADLLCVCTLPLRVAYYVHKGIWLFGDFLCRLSTYALYVNLYCSIFFMTAMSFFRCVAIVFPVQNISLVTQKKARLVCIAIWMFVILTSSPFLMANTYKDEKNNTKCFEPPQDNQAKNYVLILHYVSLFIGFIIPFITIIVCYTMIIFTLLKSSMKKNLSSRKRAIGMIIVVTAAFLVSFMPYHIQRTIHLHFLHNKTKPCDSILRMQKSVVITLSLAASNCCFDPLLYFFSGGNFRRRLSTIRKYSLSSMTYIPKKKTSLPQKGKDICKE.

Over 1–31 (MDETGNPTIPPASNNTCYDSIDDFRNQVYST) the chain is Extracellular. An N-linked (GlcNAc...) asparagine glycan is attached at Asn-14. Residues 32–52 (LYSMISVVGFFGNGFVLYVLV) form a helical membrane-spanning segment. Residues 53 to 60 (KTYHEKSA) lie on the Cytoplasmic side of the membrane. The helical transmembrane segment at 61 to 81 (FQVYMINLAVADLLCVCTLPL) threads the bilayer. Over 82 to 109 (RVAYYVHKGIWLFGDFLCRLSTYALYVN) the chain is Extracellular. Cys-99 and Cys-176 are oxidised to a cystine. A helical membrane pass occupies residues 110–130 (LYCSIFFMTAMSFFRCVAIVF). Residues 131-144 (PVQNISLVTQKKAR) are Cytoplasmic-facing. A helical transmembrane segment spans residues 145–165 (LVCIAIWMFVILTSSPFLMAN). Over 166 to 196 (TYKDEKNNTKCFEPPQDNQAKNYVLILHYVS) the chain is Extracellular. N-linked (GlcNAc...) asparagine glycosylation is present at Asn-172. Residues 197 to 217 (LFIGFIIPFITIIVCYTMIIF) form a helical membrane-spanning segment. At 218-233 (TLLKSSMKKNLSSRKR) the chain is on the cytoplasmic side. Residues 234–254 (AIGMIIVVTAAFLVSFMPYHI) traverse the membrane as a helical segment. Topologically, residues 255–279 (QRTIHLHFLHNKTKPCDSILRMQKS) are extracellular. Asn-265 is a glycosylation site (N-linked (GlcNAc...) asparagine). A helical transmembrane segment spans residues 280-300 (VVITLSLAASNCCFDPLLYFF). The Cytoplasmic segment spans residues 301-340 (SGGNFRRRLSTIRKYSLSSMTYIPKKKTSLPQKGKDICKE).

The protein belongs to the G-protein coupled receptor 1 family.

Its subcellular location is the cell membrane. In terms of biological role, receptor for cysteinyl leukotrienes mediating bronchoconstriction of individuals with and without asthma. Stimulation by LTD4 results in the contraction and proliferation of smooth muscle, edema, eosinophil migration and damage to the mucus layer in the lung. This response is mediated via a G-protein that activates a phosphatidylinositol-calcium second messenger system. The sequence is that of Cysteinyl leukotriene receptor 1 (CYSLTR1) from Cavia porcellus (Guinea pig).